Consider the following 484-residue polypeptide: tRNA sulfurtransferase (484 aa).

The THUMP domain occupies 63–167; it reads QAFGERLACI…GDKLYMVTKR (105 aa). Residues 185–186, K267, G289, and Q298 contribute to the ATP site; that span reads LI. C346 and C458 are oxidised to a cystine. Residues 406 to 484 enclose the Rhodanese domain; sequence IDTNEVVIDI…GYHNVKVYRP (79 aa). The Cysteine persulfide intermediate role is filled by C458.

This sequence belongs to the ThiI family.

The protein localises to the cytoplasm. It carries out the reaction [ThiI sulfur-carrier protein]-S-sulfanyl-L-cysteine + a uridine in tRNA + 2 reduced [2Fe-2S]-[ferredoxin] + ATP + H(+) = [ThiI sulfur-carrier protein]-L-cysteine + a 4-thiouridine in tRNA + 2 oxidized [2Fe-2S]-[ferredoxin] + AMP + diphosphate. The catalysed reaction is [ThiS sulfur-carrier protein]-C-terminal Gly-Gly-AMP + S-sulfanyl-L-cysteinyl-[cysteine desulfurase] + AH2 = [ThiS sulfur-carrier protein]-C-terminal-Gly-aminoethanethioate + L-cysteinyl-[cysteine desulfurase] + A + AMP + 2 H(+). It functions in the pathway cofactor biosynthesis; thiamine diphosphate biosynthesis. Catalyzes the ATP-dependent transfer of a sulfur to tRNA to produce 4-thiouridine in position 8 of tRNAs, which functions as a near-UV photosensor. Also catalyzes the transfer of sulfur to the sulfur carrier protein ThiS, forming ThiS-thiocarboxylate. This is a step in the synthesis of thiazole, in the thiamine biosynthesis pathway. The sulfur is donated as persulfide by IscS. This Shewanella sp. (strain ANA-3) protein is tRNA sulfurtransferase.